We begin with the raw amino-acid sequence, 460 residues long: Cysteine--tRNA ligase (460 aa).

Residue C29 coordinates Zn(2+). The short motif at 31 to 41 is the 'HIGH' region element; sequence PTVYDFAHIGN. Zn(2+) contacts are provided by C227, H252, and E256. The short motif at 285–289 is the 'KMSKS' region element; the sequence is KMSKS. ATP is bound at residue K288.

It belongs to the class-I aminoacyl-tRNA synthetase family. As to quaternary structure, monomer. The cofactor is Zn(2+).

Its subcellular location is the cytoplasm. It carries out the reaction tRNA(Cys) + L-cysteine + ATP = L-cysteinyl-tRNA(Cys) + AMP + diphosphate. The chain is Cysteine--tRNA ligase from Bradyrhizobium diazoefficiens (strain JCM 10833 / BCRC 13528 / IAM 13628 / NBRC 14792 / USDA 110).